The chain runs to 407 residues: Fructose-1,6-bisphosphatase, chloroplastic (407 aa).

A chloroplast-targeting transit peptide spans 1–50 (MAAATASSQLIFSKPYSPSRLCPFQLCVFDAKSVLSSSRRKHVNGSGVRC). Mg(2+) contacts are provided by E126, E155, D176, L178, and D179. 179 to 182 (DGSS) serves as a coordination point for substrate. C203 and C223 are oxidised to a cystine. Positions 287, 319, 337, 339, and 349 each coordinate substrate. E355 lines the Mg(2+) pocket.

Belongs to the FBPase class 1 family. As to quaternary structure, homotetramer. Mg(2+) is required as a cofactor.

The protein resides in the plastid. It localises to the chloroplast stroma. It catalyses the reaction beta-D-fructose 1,6-bisphosphate + H2O = beta-D-fructose 6-phosphate + phosphate. The protein operates within carbohydrate biosynthesis; Calvin cycle. In Pisum sativum (Garden pea), this protein is Fructose-1,6-bisphosphatase, chloroplastic (FBP).